A 101-amino-acid polypeptide reads, in one-letter code: Stefin-C (101 aa).

Position 1 is an N-acetylmethionine (M1). Positions 49-53 (QVVAG) match the Secondary area of contact motif.

This sequence belongs to the cystatin family.

It is found in the cytoplasm. Its function is as follows. Strong inhibitor of papain and cathepsin L but poor inhibitor of cathepsin B. This is Stefin-C from Bos taurus (Bovine).